The primary structure comprises 350 residues: D-alanine--D-alanine ligase (350 aa).

An ATP-grasp domain is found at 134 to 337 (KIFAAQRGVK…LPKKHSIKVS (204 aa)). An ATP-binding site is contributed by 160 to 212 (IAYPIILKPARLGSSIGVSVINEEKELDYGRDLAFEYDDTIIAESFKSGVKEY). Mg(2+)-binding residues include D289, E301, and N303.

The protein belongs to the D-alanine--D-alanine ligase family. Requires Mg(2+) as cofactor. The cofactor is Mn(2+).

The protein localises to the cytoplasm. The catalysed reaction is 2 D-alanine + ATP = D-alanyl-D-alanine + ADP + phosphate + H(+). Its pathway is cell wall biogenesis; peptidoglycan biosynthesis. Its function is as follows. Cell wall formation. In Helicobacter hepaticus (strain ATCC 51449 / 3B1), this protein is D-alanine--D-alanine ligase.